The primary structure comprises 83 residues: uncharacterized protein (83 aa).

It is found in the plastid. The protein resides in the chloroplast. This is an uncharacterized protein from Pinus thunbergii (Japanese black pine).